Here is a 581-residue protein sequence, read N- to C-terminus: DEAD-box ATP-dependent RNA helicase 22 (581 aa).

Positions valine 80–alanine 108 match the Q motif motif. Residues isoleucine 111–aspartate 380 enclose the Helicase ATP-binding domain. Position 124-131 (alanine 124–threonine 131) interacts with ATP. A DEAD box motif is present at residues aspartate 244–aspartate 247. The Helicase C-terminal domain occupies glutamine 408–alanine 566.

Belongs to the DEAD box helicase family.

The enzyme catalyses ATP + H2O = ADP + phosphate + H(+). The protein is DEAD-box ATP-dependent RNA helicase 22 (RH22) of Arabidopsis thaliana (Mouse-ear cress).